Here is a 417-residue protein sequence, read N- to C-terminus: Snake venom metalloproteinase acutolysin-C (417 aa).

Positions 1 to 20 are cleaved as a signal peptide; the sequence is MIQVLLVTICLAALPYQGSS. A propeptide spans 21-189 (activation peptide); it reads IMLESGKVND…KRPSRLNLTP (169 aa). One can recognise a Peptidase M12B domain in the interval 197–392; that stretch reads TSVNLQLIVD…KKPKCIHKKS (196 aa). 3 disulfides stabilise this stretch: Cys308–Cys387, Cys349–Cys371, and Cys351–Cys354. Residue His333 coordinates Zn(2+). Glu334 is a catalytic residue. Zn(2+) contacts are provided by His337 and His343. A propeptide spanning residues 393–417 is cleaved from the precursor; sequence LKTDTVSTSVSGNEPLDDNVDGFHA. The tract at residues 398–417 is disordered; the sequence is VSTSVSGNEPLDDNVDGFHA. The segment covering 407-417 has biased composition (acidic residues); the sequence is PLDDNVDGFHA.

It belongs to the venom metalloproteinase (M12B) family. P-I subfamily. In terms of assembly, monomer. Requires Zn(2+) as cofactor. In terms of tissue distribution, expressed by the venom gland.

Its subcellular location is the secreted. Its function is as follows. This protein is an alkaline zinc metalloprotease from snake venom that possesses weak hemorrhagic activity. The protein is Snake venom metalloproteinase acutolysin-C of Deinagkistrodon acutus (Hundred-pace snake).